The primary structure comprises 101 residues: Large ribosomal subunit protein eL21 (101 aa).

The segment covering 1–18 (MVKHSRGYRTRSRSLLRK) has biased composition (basic residues). The segment at 1-23 (MVKHSRGYRTRSRSLLRKSPRER) is disordered.

This sequence belongs to the eukaryotic ribosomal protein eL21 family.

The chain is Large ribosomal subunit protein eL21 from Saccharolobus islandicus (strain Y.N.15.51 / Yellowstone #2) (Sulfolobus islandicus).